The primary structure comprises 70 residues: SYQRFLFLVVVASLIATSLAIPKDLEKRGTTCYCGNTIGIYWFAKKTCPSGRGYTGSCGYFLGICCYPVD.

The first 21 residues, 1–21 (SYQRFLFLVVVASLIATSLAI), serve as a signal peptide directing secretion. Positions 22 to 26 (PKDLE) are excised as a propeptide. 3 disulfide bridges follow: Cys-32–Cys-65, Cys-34–Cys-58, and Cys-48–Cys-66.

It belongs to the sea anemone type 3 (BDS) potassium channel toxin family.

Its subcellular location is the secreted. It is found in the nematocyst. In terms of biological role, potently and selectively inhibits voltage-gated potassium channels Kv11/KCNH/ERG. Acts as a gating-modifier toxin that shifts the voltage-dependence of ERG activation in the positive direction and suppresses its current amplitudes elicited by strong depolarizing pulses that maximally activate the channels. In Anthopleura elegantissima (Green aggregating anemone), this protein is U-actitoxin-Ael2c.